The chain runs to 348 residues: Doublesex- and mab-3-related transcription factor dmd-10 (348 aa).

DNA-binding regions (DM) lie at residues 43–91 (CQRC…YNQF) and 119–166 (CQKC…KIRR). The interval 316-348 (SMSMSSSPSKDDESGDEDSDGLNSNSIIDVITV) is disordered.

Belongs to the DMRT family. Dimorphically expressed in the dimorphically connected interneuron AVG; expression is observed in the AVG in males, but not in hermaphrodites.

It localises to the nucleus. Transcription factor. Plays a role in neuronal signaling in polymodal sensory neuron ASH, downstream of sensory receptor activation. Required for maintenance of AVG synapses. This chain is Doublesex- and mab-3-related transcription factor dmd-10, found in Caenorhabditis elegans.